A 69-amino-acid chain; its full sequence is Brevinin-1CG5 (69 aa).

An N-terminal signal peptide occupies residues 1–22 (MFTLKKSLLLLFFLGTINLSLC). A propeptide spans 23–43 (EQERNAEEERRDDDEMDVEVE) (removed in mature form). A disulfide bond links Cys63 and Cys69.

It belongs to the frog skin active peptide (FSAP) family. Brevinin subfamily. As to expression, expressed by the skin glands.

The protein localises to the secreted. Antimicrobial peptide active against a variety of Gram-positive and Gram-negative bacterial strains. Has antifungal activity against C.albicans ATCC 10231 and a slime mold isolate. Has hemolytic activity against human erythrocytes. This is Brevinin-1CG5 from Amolops chunganensis (Chungan torrent frog).